The chain runs to 667 residues: Cyclin-dependent kinase 17 (667 aa).

Disordered regions lie at residues 1-70 and 85-184; these read MTAY…SSLN and DSEY…LRKM. Acidic residues-rich tracts occupy residues 99 to 111 and 119 to 144; these read EDFDEEEEDEFED and DEDDVEYEDEDDEDDIVVEEEEITPE. Residues 151–164 show a composition bias toward polar residues; sequence TGVTTQTTPPSNNT. Residues 328–609 enclose the Protein kinase domain; the sequence is YEKLDKLGEG…AAEAVKHPFL (282 aa). Residues 334–342 and Lys357 each bind ATP; that span reads LGEGTYATV. The active-site Proton acceptor is the Asp449. The Mg(2+) site is built by Asn454 and Asp467. A disordered region spans residues 642–667; sequence HHHSSRRHHRGTLVKDKYRMHSSHHT. Residues 644 to 653 are compositionally biased toward basic residues; it reads HSSRRHHRGT.

Belongs to the protein kinase superfamily. CMGC Ser/Thr protein kinase family. CDC2/CDKX subfamily. Interacts with cyy-1; the interaction is required to activate pct-1. Mg(2+) is required as a cofactor.

The protein localises to the cytoplasm. Its subcellular location is the cell projection. It localises to the dendrite. The protein resides in the axon. It catalyses the reaction L-seryl-[protein] + ATP = O-phospho-L-seryl-[protein] + ADP + H(+). It carries out the reaction L-threonyl-[protein] + ATP = O-phospho-L-threonyl-[protein] + ADP + H(+). Functionally, serine/threonine-protein kinase, which, in association with cyy-1, regulates the trafficking of synaptic vesicles in the DA9 motor neuron and probably also in the DD motor neurons and in RIA interneurons. Sufficient for synaptic vesicle trafficking in the DA9 motor neuron. The polypeptide is Cyclin-dependent kinase 17 (Caenorhabditis elegans).